Consider the following 231-residue polypeptide: Endo-1,4-beta-xylanase A (231 aa).

The N-terminal stretch at 1 to 19 (MVSFKSLLVAVSALTGALA) is a signal peptide. A glycan (N-linked (GlcNAc...) asparagine) is linked at Asn-32. One can recognise a GH11 domain in the interval 41–229 (QVTGNSEGYH…SSGSSSIYVQ (189 aa)). Catalysis depends on Glu-125, which acts as the Nucleophile. Glu-216 serves as the catalytic Proton donor.

This sequence belongs to the glycosyl hydrolase 11 (cellulase G) family.

The protein localises to the secreted. The enzyme catalyses Endohydrolysis of (1-&gt;4)-beta-D-xylosidic linkages in xylans.. The protein operates within glycan degradation; xylan degradation. Its activity is regulated as follows. Inhibited by the proteinaceous endoxylanase inhibitor I from T.aestivum (TAXI-I). Endo-1,4-beta-xylanase involved in the hydrolysis of xylan, a major structural heterogeneous polysaccharide found in plant biomass representing the second most abundant polysaccharide in the biosphere, after cellulose. Plays an important role in causing fusarium head blight (FHB) on cereal crops. This is Endo-1,4-beta-xylanase A (XYLA) from Gibberella zeae (strain ATCC MYA-4620 / CBS 123657 / FGSC 9075 / NRRL 31084 / PH-1) (Wheat head blight fungus).